The primary structure comprises 105 residues: Integration host factor (105 aa).

The short motif at 64–71 (LPKVGKVK) is the H2TH motif, binds DNA element. The lid, binds DNA stretch occupies residues 82-94 (APTRRLRGLGDRQ).

Belongs to the actinobacterial IHF (aIHF) family. Homodimer in solution. Binds DNA as a monomer.

It localises to the cytoplasm. In terms of biological role, a nucleoid-associated protein (NAP) required for septum formation and normal cell division as well as for DNA segregation. Binds about 135 sites across the chromosome, most of which are genes involved in virulence; most DNA-binding sites are immediately upstream of transcription start sites. When mIHF is depleted most of the genes are down-regulated. Binds supercoiled and linear dsDNA in a concentration-dependent manner, probably non-sequence specifically. Binding compacts DNA, protecting it from degradation. Initial binding to supercoiled DNA opens it fully, followed by bending and compaction. Bends and thus compacts linear DNA. Binds DNA via 2 sites, forms left-handed loops on linear DNA; at low concentrations unwinds larger cosmids (42.6 kb) then collapses and condenses DNA as protein levels rise. Forms mostly left-handed loops on condensing cosmid DNA. This chain is Integration host factor, found in Mycobacterium tuberculosis (strain ATCC 25618 / H37Rv).